Here is a 352-residue protein sequence, read N- to C-terminus: PhoH-like protein (352 aa).

Residues 1–21 (MTSRETRAADAAGARQADAQV) are disordered. Positions 9 to 20 (ADAAGARQADAQ) are enriched in low complexity. 150-157 (GPAGTGKT) serves as a coordination point for ATP.

It belongs to the PhoH family.

It localises to the cytoplasm. This Mycobacterium bovis (strain ATCC BAA-935 / AF2122/97) protein is PhoH-like protein.